Here is a 50-residue protein sequence, read N- to C-terminus: U3-ctenitoxin-Asp1a (50 aa).

Expressed by the venom gland.

Its subcellular location is the secreted. In terms of biological role, possible neurotoxin. The protein is U3-ctenitoxin-Asp1a of Ancylometes sp. (South American fishing spider).